The chain runs to 292 residues: Hydroxysqualene synthase (292 aa).

The protein belongs to the phytoene/squalene synthase family. HpnC subfamily.

It catalyses the reaction presqualene diphosphate + H2O = hydroxysqualene + diphosphate. It participates in secondary metabolite biosynthesis; hopanoid biosynthesis. Involved in the biosynthesis of the hopanoid precursor squalene (SQ) from farnesyl diphosphate (FPP). Catalyzes the second step, the conversion of presqualene diphosphate (PSPP) to hydroxysqualene (HSQ). The sequence is that of Hydroxysqualene synthase from Rhodopseudomonas palustris (strain ATCC BAA-98 / CGA009).